A 290-amino-acid polypeptide reads, in one-letter code: Probable endonuclease 4 (290 aa).

Zn(2+) contacts are provided by His66, His106, Glu143, Asp179, His182, His216, Asp229, His231, and Glu261.

The protein belongs to the AP endonuclease 2 family. Zn(2+) is required as a cofactor.

It carries out the reaction Endonucleolytic cleavage to 5'-phosphooligonucleotide end-products.. Its function is as follows. Endonuclease IV plays a role in DNA repair. It cleaves phosphodiester bonds at apurinic or apyrimidinic (AP) sites, generating a 3'-hydroxyl group and a 5'-terminal sugar phosphate. This is Probable endonuclease 4 from Solibacter usitatus (strain Ellin6076).